The chain runs to 424 residues: UPF0229 protein Avin_46880 (424 aa).

The segment at arginine 57–glycine 108 is disordered. Positions serine 92–serine 101 are enriched in gly residues.

This sequence belongs to the UPF0229 family.

The polypeptide is UPF0229 protein Avin_46880 (Azotobacter vinelandii (strain DJ / ATCC BAA-1303)).